A 325-amino-acid chain; its full sequence is Transaldolase (325 aa).

Lys125 functions as the Schiff-base intermediate with substrate in the catalytic mechanism.

It belongs to the transaldolase family. Type 2 subfamily.

Its subcellular location is the cytoplasm. The enzyme catalyses D-sedoheptulose 7-phosphate + D-glyceraldehyde 3-phosphate = D-erythrose 4-phosphate + beta-D-fructose 6-phosphate. Its pathway is carbohydrate degradation; pentose phosphate pathway; D-glyceraldehyde 3-phosphate and beta-D-fructose 6-phosphate from D-ribose 5-phosphate and D-xylulose 5-phosphate (non-oxidative stage): step 2/3. In terms of biological role, transaldolase is important for the balance of metabolites in the pentose-phosphate pathway. In Campylobacter jejuni subsp. jejuni serotype O:23/36 (strain 81-176), this protein is Transaldolase.